We begin with the raw amino-acid sequence, 94 residues long: Large ribosomal subunit protein bL25 (94 aa).

Belongs to the bacterial ribosomal protein bL25 family. As to quaternary structure, part of the 50S ribosomal subunit; part of the 5S rRNA/L5/L18/L25 subcomplex. Contacts the 5S rRNA. Binds to the 5S rRNA independently of L5 and L18.

This is one of the proteins that binds to the 5S RNA in the ribosome where it forms part of the central protuberance. This Klebsiella pneumoniae subsp. pneumoniae (strain ATCC 700721 / MGH 78578) protein is Large ribosomal subunit protein bL25.